Reading from the N-terminus, the 224-residue chain is GrpE protein homolog 2, mitochondrial (224 aa).

A mitochondrion-targeting transit peptide spans 1–31; it reads MAARSLWAVQRLQRLLASGAMSESRGWLHPF. Lys141 bears the N6-acetyllysine mark.

It belongs to the GrpE family. In terms of assembly, probable component of the PAM complex at least composed of a mitochondrial HSP70 protein, GRPEL1 or GRPEL2, TIMM44, TIMM16/PAM16 and TIMM14/DNAJC19. As to expression, ubiquitous.

The protein resides in the mitochondrion matrix. Functionally, essential component of the PAM complex, a complex required for the translocation of transit peptide-containing proteins from the inner membrane into the mitochondrial matrix in an ATP-dependent manner. Seems to control the nucleotide-dependent binding of mitochondrial HSP70 to substrate proteins. Stimulates ATPase activity of mt-HSP70. May also serve to modulate the interconversion of oligomeric (inactive) and monomeric (active) forms of mt-HSP70. This is GrpE protein homolog 2, mitochondrial (Grpel2) from Mus musculus (Mouse).